The sequence spans 510 residues: Leucine-rich repeat protein lrrA (510 aa).

LRR repeat units lie at residues 14-34, 35-59, 60-82, 84-106, 107-130, 132-152, 153-176, 177-200, 202-222, 224-245, 246-270, 272-292, 293-315, 316-340, 341-363, 365-386, 387-408, 410-432, 433-458, and 460-478; these read YRKR…PPTI, GALQ…IGKL, SKVE…IGSL, TLKQ…NIGA, LKNL…ISNC, ALEY…EFGK, LYNL…ISGW, VKLE…CLLG, LSTL…LSSM, SLTN…LSNL, RQLK…LLSE, IELD…IATL, INLQ…VGNL, INLQ…IGKL, VNLK…IASM, ALKE…IGEL, SGLT…SFGN, SELQ…LDGL, KSCT…LIGL, and ILDV…IVMK.

The protein localises to the cytoplasm. Functionally, involved in cytoskeleton remodeling, which is needed for normal chemotactic aggregation and efficient cell sorting during multicellular morphogenesis. The protein is Leucine-rich repeat protein lrrA (lrrA) of Dictyostelium discoideum (Social amoeba).